A 109-amino-acid chain; its full sequence is Class I hydrophobin 18 (109 aa).

The signal sequence occupies residues 1-20; it reads MFTEQVLNVIILLQTATVTA. 4 disulfides stabilise this stretch: cysteine 28–cysteine 88, cysteine 35–cysteine 82, cysteine 36–cysteine 69, and cysteine 89–cysteine 102. 2 N-linked (GlcNAc...) asparagine glycosylation sites follow: asparagine 91 and asparagine 106.

It belongs to the fungal hydrophobin family. In terms of assembly, self-assembles to form functional amyloid fibrils called rodlets. Self-assembly into fibrillar rodlets occurs spontaneously at hydrophobic:hydrophilic interfaces and the rodlets further associate laterally to form amphipathic monolayers.

The protein localises to the secreted. Its subcellular location is the cell wall. In terms of biological role, aerial growth, conidiation, and dispersal of filamentous fungi in the environment rely upon a capability of their secreting small amphipathic proteins called hydrophobins (HPBs) with low sequence identity. Class I can self-assemble into an outermost layer of rodlet bundles on aerial cell surfaces, conferring cellular hydrophobicity that supports fungal growth, development and dispersal; whereas Class II form highly ordered films at water-air interfaces through intermolecular interactions but contribute nothing to the rodlet structure. This is Class I hydrophobin 18 from Pleurotus ostreatus (strain PC15) (Oyster mushroom).